The sequence spans 112 residues: Putative pterin-4-alpha-carbinolamine dehydratase (112 aa).

It belongs to the pterin-4-alpha-carbinolamine dehydratase family.

The enzyme catalyses (4aS,6R)-4a-hydroxy-L-erythro-5,6,7,8-tetrahydrobiopterin = (6R)-L-erythro-6,7-dihydrobiopterin + H2O. This is Putative pterin-4-alpha-carbinolamine dehydratase from Shewanella pealeana (strain ATCC 700345 / ANG-SQ1).